Consider the following 206-residue polypeptide: ATP synthase subunit b (206 aa).

Residues 14–34 (VMMPAAVCAAVIGLSALGFAA) form a helical membrane-spanning segment.

The protein belongs to the ATPase B chain family. As to quaternary structure, F-type ATPases have 2 components, F(1) - the catalytic core - and F(0) - the membrane proton channel. F(1) has five subunits: alpha(3), beta(3), gamma(1), delta(1), epsilon(1). F(0) has three main subunits: a(1), b(2) and c(10-14). The alpha and beta chains form an alternating ring which encloses part of the gamma chain. F(1) is attached to F(0) by a central stalk formed by the gamma and epsilon chains, while a peripheral stalk is formed by the delta and b chains.

It is found in the cell inner membrane. In terms of biological role, f(1)F(0) ATP synthase produces ATP from ADP in the presence of a proton or sodium gradient. F-type ATPases consist of two structural domains, F(1) containing the extramembraneous catalytic core and F(0) containing the membrane proton channel, linked together by a central stalk and a peripheral stalk. During catalysis, ATP synthesis in the catalytic domain of F(1) is coupled via a rotary mechanism of the central stalk subunits to proton translocation. Its function is as follows. Component of the F(0) channel, it forms part of the peripheral stalk, linking F(1) to F(0). This chain is ATP synthase subunit b, found in Geobacter metallireducens (strain ATCC 53774 / DSM 7210 / GS-15).